The sequence spans 87 residues: Large ribosomal subunit protein bL31B (87 aa).

This sequence belongs to the bacterial ribosomal protein bL31 family. Type B subfamily. In terms of assembly, part of the 50S ribosomal subunit.

The sequence is that of Large ribosomal subunit protein bL31B from Escherichia coli O8 (strain IAI1).